The chain runs to 454 residues: METYTGIPEELKFAVLERIQPTEPEREKLFAIQEELASQVKIAAEKLGIPGVLVKMVGSAARGTWLSGTHDIDVFISFPEETSRKDLETLGMAIAREVARYAEHAEDRHAEHPYLNITYKGFDVDLVPCFRVASASQIKSAVDRTPFHNDFVKPRIKGHEDEVLLLKQFMRGGGVYGSELKTQGFSGYLTELLVIRYGSFKNTIYAACSWKPGEKIDIMQHGEIEHEEPLVVIDPTDPRRNVAAALSLDKFCTFIDHCREFLKNPELSFFFPAPILPLEDSEILEKLESRKSTQLAVVFKTPDVVEDVLFPQLYKMEQAVAALLKEYDFTVIKTGVWSGNTETAVMMELISGTLPNVKKHIGPPVWVKVHAEKFKEKYQAADGVFGGYIENGKYIFEILRKYPTARGLLEDRLMSCSLGKQVHQSVNEGFEIIENAGICRLKEYDFRIYLRKWI.

ATP is bound by residues serine 59 and arginine 62. The CTP site is built by serine 59 and arginine 62. Mg(2+) is bound by residues aspartate 71, aspartate 73, and aspartate 125. ATP is bound by residues histidine 148, lysine 167, and tyrosine 176. Residues histidine 148, lysine 167, and tyrosine 176 each coordinate CTP.

This sequence belongs to the tRNA nucleotidyltransferase/poly(A) polymerase family. Archaeal CCA-adding enzyme subfamily. As to quaternary structure, homodimer. Mg(2+) is required as a cofactor.

It catalyses the reaction a tRNA precursor + 2 CTP + ATP = a tRNA with a 3' CCA end + 3 diphosphate. The enzyme catalyses a tRNA with a 3' CCA end + 2 CTP + ATP = a tRNA with a 3' CCACCA end + 3 diphosphate. Its function is as follows. Catalyzes the addition and repair of the essential 3'-terminal CCA sequence in tRNAs without using a nucleic acid template. Adds these three nucleotides in the order of C, C, and A to the tRNA nucleotide-73, using CTP and ATP as substrates and producing inorganic pyrophosphate. tRNA 3'-terminal CCA addition is required both for tRNA processing and repair. Also involved in tRNA surveillance by mediating tandem CCA addition to generate a CCACCA at the 3' terminus of unstable tRNAs. While stable tRNAs receive only 3'-terminal CCA, unstable tRNAs are marked with CCACCA and rapidly degraded. The sequence is that of CCA-adding enzyme from Methanosarcina barkeri (strain Fusaro / DSM 804).